The following is a 78-amino-acid chain: Acyl carrier protein (78 aa).

A Carrier domain is found at 2–77 (STIEERVKKI…AAIDYINGHQ (76 aa)). Position 37 is an O-(pantetheine 4'-phosphoryl)serine (serine 37).

The protein belongs to the acyl carrier protein (ACP) family. Post-translationally, 4'-phosphopantetheine is transferred from CoA to a specific serine of apo-ACP by AcpS. This modification is essential for activity because fatty acids are bound in thioester linkage to the sulfhydryl of the prosthetic group.

Its subcellular location is the cytoplasm. It functions in the pathway lipid metabolism; fatty acid biosynthesis. Its function is as follows. Carrier of the growing fatty acid chain in fatty acid biosynthesis. The chain is Acyl carrier protein from Erwinia tasmaniensis (strain DSM 17950 / CFBP 7177 / CIP 109463 / NCPPB 4357 / Et1/99).